The sequence spans 279 residues: Large ribosomal subunit protein uL2 (279 aa).

Residues 223-279 are disordered; it reads PVAMNPVDHPMGGGEGRASGGHPRSRKGLPAKGFKTRSRTKASNKYIVERRKTRKKK. The segment covering 245-264 has biased composition (basic residues); it reads PRSRKGLPAKGFKTRSRTKA.

The protein belongs to the universal ribosomal protein uL2 family. As to quaternary structure, part of the 50S ribosomal subunit. Forms a bridge to the 30S subunit in the 70S ribosome.

Functionally, one of the primary rRNA binding proteins. Required for association of the 30S and 50S subunits to form the 70S ribosome, for tRNA binding and peptide bond formation. It has been suggested to have peptidyltransferase activity; this is somewhat controversial. Makes several contacts with the 16S rRNA in the 70S ribosome. In Christiangramia forsetii (strain DSM 17595 / CGMCC 1.15422 / KT0803) (Gramella forsetii), this protein is Large ribosomal subunit protein uL2.